The chain runs to 67 residues: Large ribosomal subunit protein uL29 (67 aa).

This sequence belongs to the universal ribosomal protein uL29 family.

The chain is Large ribosomal subunit protein uL29 from Desulforudis audaxviator (strain MP104C).